Consider the following 312-residue polypeptide: Methionyl-tRNA formyltransferase (312 aa).

109 to 112 provides a ligand contact to (6S)-5,6,7,8-tetrahydrofolate; it reads SLLP.

The protein belongs to the Fmt family.

It catalyses the reaction L-methionyl-tRNA(fMet) + (6R)-10-formyltetrahydrofolate = N-formyl-L-methionyl-tRNA(fMet) + (6S)-5,6,7,8-tetrahydrofolate + H(+). Attaches a formyl group to the free amino group of methionyl-tRNA(fMet). The formyl group appears to play a dual role in the initiator identity of N-formylmethionyl-tRNA by promoting its recognition by IF2 and preventing the misappropriation of this tRNA by the elongation apparatus. The sequence is that of Methionyl-tRNA formyltransferase from Listeria welshimeri serovar 6b (strain ATCC 35897 / DSM 20650 / CCUG 15529 / CIP 8149 / NCTC 11857 / SLCC 5334 / V8).